The primary structure comprises 347 residues: Quinolinate synthase (347 aa).

His47 and Ser68 together coordinate iminosuccinate. Cys113 serves as a coordination point for [4Fe-4S] cluster. Iminosuccinate is bound by residues 139 to 141 (YAN) and Ser156. Cys200 is a binding site for [4Fe-4S] cluster. Iminosuccinate-binding positions include 226–228 (HPE) and Thr243. Position 297 (Cys297) interacts with [4Fe-4S] cluster.

Belongs to the quinolinate synthase family. Type 1 subfamily. Requires [4Fe-4S] cluster as cofactor.

It localises to the cytoplasm. The enzyme catalyses iminosuccinate + dihydroxyacetone phosphate = quinolinate + phosphate + 2 H2O + H(+). Its pathway is cofactor biosynthesis; NAD(+) biosynthesis; quinolinate from iminoaspartate: step 1/1. Its function is as follows. Catalyzes the condensation of iminoaspartate with dihydroxyacetone phosphate to form quinolinate. The polypeptide is Quinolinate synthase (Salmonella heidelberg (strain SL476)).